A 90-amino-acid chain; its full sequence is Acylphosphatase (90 aa).

An Acylphosphatase-like domain is found at 3-90; it reads RYSAIVQGRV…DGEKKFSIKY (88 aa). Catalysis depends on residues R18 and N36.

The protein belongs to the acylphosphatase family.

It catalyses the reaction an acyl phosphate + H2O = a carboxylate + phosphate + H(+). The chain is Acylphosphatase (acyP) from Clostridium beijerinckii (strain ATCC 51743 / NCIMB 8052) (Clostridium acetobutylicum).